Reading from the N-terminus, the 280-residue chain is Probable endonuclease 4 (280 aa).

Positions 69, 109, 145, 179, 182, 216, 229, 231, and 261 each coordinate Zn(2+).

It belongs to the AP endonuclease 2 family. Zn(2+) is required as a cofactor.

The catalysed reaction is Endonucleolytic cleavage to 5'-phosphooligonucleotide end-products.. In terms of biological role, endonuclease IV plays a role in DNA repair. It cleaves phosphodiester bonds at apurinic or apyrimidinic (AP) sites, generating a 3'-hydroxyl group and a 5'-terminal sugar phosphate. The chain is Probable endonuclease 4 from Erwinia tasmaniensis (strain DSM 17950 / CFBP 7177 / CIP 109463 / NCPPB 4357 / Et1/99).